We begin with the raw amino-acid sequence, 348 residues long: Dihydroorotase (348 aa).

Zn(2+) contacts are provided by His-13 and His-15. Substrate is bound by residues 15–17 and Asn-41; that span reads HLR. Residues Lys-99, His-136, and His-174 each contribute to the Zn(2+) site. Lys-99 carries the post-translational modification N6-carboxylysine. His-136 contacts substrate. Leu-219 contributes to the substrate binding site. Asp-247 contacts Zn(2+). Residue Asp-247 is part of the active site. Residues His-251 and Ala-263 each coordinate substrate.

The protein belongs to the metallo-dependent hydrolases superfamily. DHOase family. Class II DHOase subfamily. As to quaternary structure, homodimer. Zn(2+) serves as cofactor.

The catalysed reaction is (S)-dihydroorotate + H2O = N-carbamoyl-L-aspartate + H(+). Its pathway is pyrimidine metabolism; UMP biosynthesis via de novo pathway; (S)-dihydroorotate from bicarbonate: step 3/3. Functionally, catalyzes the reversible cyclization of carbamoyl aspartate to dihydroorotate. The protein is Dihydroorotase of Rhizobium etli (strain ATCC 51251 / DSM 11541 / JCM 21823 / NBRC 15573 / CFN 42).